A 310-amino-acid chain; its full sequence is Epoxyqueuosine reductase (310 aa).

The Proton donor role is filled by Asp133. The 30-residue stretch at 179–208 (YDNPSDKDYCGTCTRCVDACPTDAILQDNL) folds into the 4Fe-4S ferredoxin-type domain. Residues Cys188, Cys191, Cys194, Cys198, Cys214, Cys241, Cys244, and Cys248 each coordinate [4Fe-4S] cluster.

The protein belongs to the QueG family. As to quaternary structure, monomer. Cob(II)alamin serves as cofactor. [4Fe-4S] cluster is required as a cofactor.

The protein resides in the cytoplasm. The catalysed reaction is epoxyqueuosine(34) in tRNA + AH2 = queuosine(34) in tRNA + A + H2O. It participates in tRNA modification; tRNA-queuosine biosynthesis. In terms of biological role, catalyzes the conversion of epoxyqueuosine (oQ) to queuosine (Q), which is a hypermodified base found in the wobble positions of tRNA(Asp), tRNA(Asn), tRNA(His) and tRNA(Tyr). This is Epoxyqueuosine reductase from Cyclobacterium marinum (strain ATCC 25205 / DSM 745 / LMG 13164 / NCIMB 1802) (Flectobacillus marinus).